The primary structure comprises 205 residues: Probable thymidylate kinase (205 aa).

7–14 provides a ligand contact to ATP; the sequence is GIDGAGKS.

It belongs to the thymidylate kinase family.

The catalysed reaction is dTMP + ATP = dTDP + ADP. This chain is Probable thymidylate kinase, found in Thermococcus onnurineus (strain NA1).